We begin with the raw amino-acid sequence, 450 residues long: Ribulose bisphosphate carboxylase large chain (450 aa).

Position 4 is an N6,N6,N6-trimethyllysine (lysine 4). Substrate-binding residues include asparagine 113 and threonine 163. Lysine 165 acts as the Proton acceptor in catalysis. Residue lysine 167 coordinates substrate. The Mg(2+) site is built by lysine 191, aspartate 193, and glutamate 194. Lysine 191 carries the N6-carboxylysine modification. Histidine 284 (proton acceptor) is an active-site residue. Positions 285, 317, and 369 each coordinate substrate.

This sequence belongs to the RuBisCO large chain family. Type I subfamily. In terms of assembly, heterohexadecamer of 8 large chains and 8 small chains; disulfide-linked. The disulfide link is formed within the large subunit homodimers. It depends on Mg(2+) as a cofactor. Post-translationally, the disulfide bond which can form in the large chain dimeric partners within the hexadecamer appears to be associated with oxidative stress and protein turnover.

It localises to the plastid. The protein localises to the chloroplast. It carries out the reaction 2 (2R)-3-phosphoglycerate + 2 H(+) = D-ribulose 1,5-bisphosphate + CO2 + H2O. It catalyses the reaction D-ribulose 1,5-bisphosphate + O2 = 2-phosphoglycolate + (2R)-3-phosphoglycerate + 2 H(+). In terms of biological role, ruBisCO catalyzes two reactions: the carboxylation of D-ribulose 1,5-bisphosphate, the primary event in carbon dioxide fixation, as well as the oxidative fragmentation of the pentose substrate in the photorespiration process. Both reactions occur simultaneously and in competition at the same active site. The chain is Ribulose bisphosphate carboxylase large chain from Crassula rupestris subsp. marnieriana (Pygmyweed).